The chain runs to 283 residues: Phytanoyl-CoA dioxygenase (283 aa).

2-oxoglutarate is bound by residues Lys-99, Met-138, His-153–Asp-155, and Trp-170. Fe cation is bound by residues His-153 and Asp-155. Position 238 (His-238) interacts with Fe cation. Ser-240 and Arg-249 together coordinate 2-oxoglutarate.

This sequence belongs to the PhyH family. Fe cation serves as cofactor. Requires L-ascorbate as cofactor.

The catalysed reaction is phytanoyl-CoA + 2-oxoglutarate + O2 = 2-hydroxyphytanoyl-CoA + succinate + CO2. It functions in the pathway lipid metabolism; fatty acid metabolism. In terms of biological role, converts phytanoyl-CoA to 2-hydroxyphytanoyl-CoA. The chain is Phytanoyl-CoA dioxygenase from Arabidopsis thaliana (Mouse-ear cress).